Consider the following 669-residue polypeptide: Myb-like protein M (669 aa).

The tract at residues 27–69 (DPSLMDDEFSDNEYDLSPKDDVPSPSKRGRGQIQNGIRRSPNK) is disordered. Positions 30–40 (LMDDEFSDNEY) are enriched in acidic residues. HTH myb-type domains are found at residues 60–118 (QNGI…SPDI) and 119–170 (RKGP…SREV). 2 consecutive DNA-binding regions (H-T-H motif) follow at residues 90 to 114 (WKRISAEMGGQKTGAQCAQHWKRVL) and 142 to 166 (WKKIAKRICKRTDIQCRYQYLKSLQ). The 52-residue stretch at 172 to 223 (WVPKEDEVLVKKVDEMGENLSWLEVSEYLAKLKHTNTLRTALECKTRYLQLT) folds into the Myb-like domain. Disordered stretches follow at residues 226–530 (GGSI…EDNG) and 550–636 (IKNK…PHQS). 3 stretches are compositionally biased toward low complexity: residues 234–382 (NQSN…SSPS), 389–415 (NNNNNNNNNNNNNNNNNNNNNNNNSNN), and 450–464 (PTSLTLPSSTLSSPS). The span at 465 to 482 (CNNSIRQPSPSPSIKTFK) shows a compositional bias: polar residues. Low complexity-rich tracts occupy residues 483-521 (STIVSTPSRPSPSSSTNSAFSINNIIDSENNNNNNNNDN), 555-593 (NNNNNNNNNNNNNNNNNNNNNNNNNNNNGNNTLSYNSDN), and 611-636 (SNFKNHNNNQSNTSPMSSPISSPHQS).

It localises to the nucleus. In Dictyostelium discoideum (Social amoeba), this protein is Myb-like protein M (mybM).